A 122-amino-acid polypeptide reads, in one-letter code: Ribosome-binding factor A (122 aa).

This sequence belongs to the RbfA family. As to quaternary structure, monomer. Binds 30S ribosomal subunits, but not 50S ribosomal subunits or 70S ribosomes.

Its subcellular location is the cytoplasm. Functionally, one of several proteins that assist in the late maturation steps of the functional core of the 30S ribosomal subunit. Associates with free 30S ribosomal subunits (but not with 30S subunits that are part of 70S ribosomes or polysomes). Required for efficient processing of 16S rRNA. May interact with the 5'-terminal helix region of 16S rRNA. This Moorella thermoacetica (strain ATCC 39073 / JCM 9320) protein is Ribosome-binding factor A.